A 334-amino-acid polypeptide reads, in one-letter code: Holliday junction branch migration complex subunit RuvB (334 aa).

The interval 4 to 184 is large ATPase domain (RuvB-L); sequence ADRLIQPQLQ…FGIPLRLEFY (181 aa). ATP contacts are provided by residues R24, G65, K68, T69, T70, 131–133, R174, Y184, and R221; that span reads EDY. Residue T69 participates in Mg(2+) binding. The interval 185–255 is small ATPAse domain (RuvB-S); the sequence is NIKDLSTIVT…VADHALDLLD (71 aa). The tract at residues 258-334 is head domain (RuvB-H); that stretch reads NEGFDYMDRK…YQHFQLIKPE (77 aa). DNA contacts are provided by R294, R313, and R318.

Belongs to the RuvB family. Homohexamer. Forms an RuvA(8)-RuvB(12)-Holliday junction (HJ) complex. HJ DNA is sandwiched between 2 RuvA tetramers; dsDNA enters through RuvA and exits via RuvB. An RuvB hexamer assembles on each DNA strand where it exits the tetramer. Each RuvB hexamer is contacted by two RuvA subunits (via domain III) on 2 adjacent RuvB subunits; this complex drives branch migration. In the full resolvosome a probable DNA-RuvA(4)-RuvB(12)-RuvC(2) complex forms which resolves the HJ.

The protein localises to the cytoplasm. It carries out the reaction ATP + H2O = ADP + phosphate + H(+). Its function is as follows. The RuvA-RuvB-RuvC complex processes Holliday junction (HJ) DNA during genetic recombination and DNA repair, while the RuvA-RuvB complex plays an important role in the rescue of blocked DNA replication forks via replication fork reversal (RFR). RuvA specifically binds to HJ cruciform DNA, conferring on it an open structure. The RuvB hexamer acts as an ATP-dependent pump, pulling dsDNA into and through the RuvAB complex. RuvB forms 2 homohexamers on either side of HJ DNA bound by 1 or 2 RuvA tetramers; 4 subunits per hexamer contact DNA at a time. Coordinated motions by a converter formed by DNA-disengaged RuvB subunits stimulates ATP hydrolysis and nucleotide exchange. Immobilization of the converter enables RuvB to convert the ATP-contained energy into a lever motion, pulling 2 nucleotides of DNA out of the RuvA tetramer per ATP hydrolyzed, thus driving DNA branch migration. The RuvB motors rotate together with the DNA substrate, which together with the progressing nucleotide cycle form the mechanistic basis for DNA recombination by continuous HJ branch migration. Branch migration allows RuvC to scan DNA until it finds its consensus sequence, where it cleaves and resolves cruciform DNA. This Shewanella sp. (strain W3-18-1) protein is Holliday junction branch migration complex subunit RuvB.